A 633-amino-acid chain; its full sequence is MTDSKLRSADPELEHQTRQGLPSLVLAALGVVYGDIGTSPLYAFREALHATGGSGADRANVLGILSLIVWALTIVVTLKYVTFVLKADNRGEGGTLSLMTLAREGLTGRPKWVLVLGVIGASLFLGDAIITPAISVLSAVEGIEVVAPALSNWVVPITLTIIAVLFFVQRFGTSGVASVFGPVTALWFIVLGVSGAIHIFDDPSVLAAVNPVHALQYIANNIGSAIAVLGAVFLAVTGAEALYVDLGHFGRRPIVTAWFSLVFPSLLLNYFGQGAFVLANPEMAEHPFFSMHPEWARIPMVCLATAATVIASQAVISGAYSLVRQAMHLNLLPRLRILHTSETQSGQIFMPQVNNLLFIFVAALVLFFQNSSGLSAAYGIAVTGEMFITSILLFIVMRRIWSWKLTAALAVIVPITLIDAGFLAANIAKFAEGGWVPVAVASTMALIMQTWTAGRRLLAARTKADEIPLSAIIDNLARKKPPTVPGTAMFLTSDIEGAPTALLHSLKHYKVLHEQNVILSVVTSTTPFVPDDEKIFLESFNRHFSRLVITFGYMETPNIPRALVLARKLGLKFDIMSTSFFLSRRTILPSKKGGLPFWQDRLFISLAENASNATDYFGLPSGRVVELGLQTTI.

12 consecutive transmembrane segments (helical) span residues 24–44 (LVLAALGVVYGDIGTSPLYAF), 61–81 (VLGILSLIVWALTIVVTLKYV), 114–134 (LVLGVIGASLFLGDAIITPAI), 148–168 (PALSNWVVPITLTIIAVLFFV), 180–200 (FGPVTALWFIVLGVSGAIHIF), 222–242 (IGSAIAVLGAVFLAVTGAEAL), 258–278 (WFSLVFPSLLLNYFGQGAFVL), 298–318 (IPMVCLATAATVIASQAVISG), 348–368 (IFMPQVNNLLFIFVAALVLFF), 377–397 (AYGIAVTGEMFITSILLFIVM), 405–425 (LTAALAVIVPITLIDAGFLAA), and 427–447 (IAKFAEGGWVPVAVASTMALI).

It belongs to the HAK/KUP transporter (TC 2.A.72) family.

Its subcellular location is the cell inner membrane. It catalyses the reaction K(+)(in) + H(+)(in) = K(+)(out) + H(+)(out). In terms of biological role, transport of potassium into the cell. Likely operates as a K(+):H(+) symporter. This chain is Probable potassium transport system protein Kup 3, found in Rhizobium johnstonii (strain DSM 114642 / LMG 32736 / 3841) (Rhizobium leguminosarum bv. viciae).